Reading from the N-terminus, the 282-residue chain is Pantothenate synthetase (282 aa).

30–37 (MGYLHEGH) is an ATP binding site. His-37 functions as the Proton donor in the catalytic mechanism. Residue Gln-61 participates in (R)-pantoate binding. Gln-61 contributes to the beta-alanine binding site. 147 to 150 (GMKD) lines the ATP pocket. Gln-153 is a (R)-pantoate binding site. ATP contacts are provided by residues Val-176 and 184-187 (KSSR).

It belongs to the pantothenate synthetase family. In terms of assembly, homodimer.

It localises to the cytoplasm. The catalysed reaction is (R)-pantoate + beta-alanine + ATP = (R)-pantothenate + AMP + diphosphate + H(+). It functions in the pathway cofactor biosynthesis; (R)-pantothenate biosynthesis; (R)-pantothenate from (R)-pantoate and beta-alanine: step 1/1. In terms of biological role, catalyzes the condensation of pantoate with beta-alanine in an ATP-dependent reaction via a pantoyl-adenylate intermediate. The sequence is that of Pantothenate synthetase from Bacillus thuringiensis (strain Al Hakam).